The sequence spans 160 residues: Ribosome maturation factor RimP (160 aa).

It belongs to the RimP family.

The protein localises to the cytoplasm. In terms of biological role, required for maturation of 30S ribosomal subunits. The sequence is that of Ribosome maturation factor RimP from Symbiobacterium thermophilum (strain DSM 24528 / JCM 14929 / IAM 14863 / T).